The primary structure comprises 245 residues: Probable transcriptional regulatory protein MAG6590 (245 aa).

The protein belongs to the TACO1 family.

The protein localises to the cytoplasm. The sequence is that of Probable transcriptional regulatory protein MAG6590 from Mycoplasmopsis agalactiae (strain NCTC 10123 / CIP 59.7 / PG2) (Mycoplasma agalactiae).